A 105-amino-acid chain; its full sequence is Small ribosomal subunit protein uS10 (105 aa).

The protein belongs to the universal ribosomal protein uS10 family. Part of the 30S ribosomal subunit.

Its function is as follows. Involved in the binding of tRNA to the ribosomes. This is Small ribosomal subunit protein uS10 from Trichodesmium erythraeum (strain IMS101).